We begin with the raw amino-acid sequence, 545 residues long: Hydroxylamine reductase (545 aa).

Cys-3, Cys-6, Cys-15, and Cys-21 together coordinate [4Fe-4S] cluster. The hybrid [4Fe-2O-2S] cluster site is built by His-240, Glu-264, Cys-309, Cys-401, Cys-429, Cys-454, Glu-488, and Lys-490. At Cys-401 the chain carries Cysteine persulfide.

The protein belongs to the HCP family. The cofactor is [4Fe-4S] cluster. Hybrid [4Fe-2O-2S] cluster serves as cofactor.

The protein localises to the cytoplasm. It carries out the reaction A + NH4(+) + H2O = hydroxylamine + AH2 + H(+). Its function is as follows. Catalyzes the reduction of hydroxylamine to form NH(3) and H(2)O. The protein is Hydroxylamine reductase of Rippkaea orientalis (strain PCC 8801 / RF-1) (Cyanothece sp. (strain PCC 8801)).